A 966-amino-acid chain; its full sequence is RNA polymerase-associated protein RapA (966 aa).

The 175-residue stretch at 163 to 337 (EVGRRIAPRV…FARLHLLDPN (175 aa)) folds into the Helicase ATP-binding domain. 176–183 (DEVGLGKT) contributes to the ATP binding site. Positions 283-286 (DEAH) match the DEAH box motif. The 155-residue stretch at 489–643 (RVDWLINLVK…TCPMGAILHE (155 aa)) folds into the Helicase C-terminal domain.

Belongs to the SNF2/RAD54 helicase family. RapA subfamily. As to quaternary structure, interacts with the RNAP. Has a higher affinity for the core RNAP than for the holoenzyme. Its ATPase activity is stimulated by binding to RNAP.

Functionally, transcription regulator that activates transcription by stimulating RNA polymerase (RNAP) recycling in case of stress conditions such as supercoiled DNA or high salt concentrations. Probably acts by releasing the RNAP, when it is trapped or immobilized on tightly supercoiled DNA. Does not activate transcription on linear DNA. Probably not involved in DNA repair. This chain is RNA polymerase-associated protein RapA, found in Histophilus somni (strain 129Pt) (Haemophilus somnus).